A 347-amino-acid polypeptide reads, in one-letter code: UPF0284 protein LS215_0030 (347 aa).

This sequence belongs to the UPF0284 family.

This chain is UPF0284 protein LS215_0030, found in Saccharolobus islandicus (strain L.S.2.15 / Lassen #1) (Sulfolobus islandicus).